Here is a 239-residue protein sequence, read N- to C-terminus: 6-phosphogluconolactonase (239 aa).

This sequence belongs to the glucosamine/galactosamine-6-phosphate isomerase family. 6-phosphogluconolactonase subfamily.

The enzyme catalyses 6-phospho-D-glucono-1,5-lactone + H2O = 6-phospho-D-gluconate + H(+). It functions in the pathway carbohydrate degradation; pentose phosphate pathway; D-ribulose 5-phosphate from D-glucose 6-phosphate (oxidative stage): step 2/3. Functionally, hydrolysis of 6-phosphogluconolactone to 6-phosphogluconate. In Xylella fastidiosa (strain 9a5c), this protein is 6-phosphogluconolactonase (pgl).